The following is a 34-amino-acid chain: Voltage sensor toxin 3 (34 aa).

Disulfide bonds link C2–C17, C9–C22, and C16–C29.

Belongs to the neurotoxin 10 (Hwtx-1) family. 61 (VSTX3) subfamily. As to expression, expressed by the venom gland.

The protein localises to the secreted. In terms of biological role, potent voltage-gated sodium channel blocker (IC(50)=190 nM and 210 nM on human and rat Nav1.3/SCN3A respectively, 430 nM on human Nav1.7/SCN9A, 770 nM and 290 nM on human and rat Nav1.8/SCN10A, respectively). Binds the voltage-sensor domain of the potassium channel KvAP (from Aeropyrum pernix) and weakly inhibits this channel. The protein is Voltage sensor toxin 3 of Grammostola rosea (Chilean rose tarantula).